The sequence spans 553 residues: MAVDPPKADPKGVAVDSSRRCPALGSREDQSAKAGGCCGSRDRVRRCIRANLLVLLTVAAVVAGVGLGLGVSAAGGADALGPARLTRFAFPGELLLRLLKMIILPLVVCSLIGGAASLDPSALGRVGAWALLFFLVTTLLASALGVGLALALKPGAAVTAITSINDSVVDPCARSAPTKEALDSFLDLVRNIFPSNLVSAAFRSFATSYEPKDNSCKIPQSCIQREINSTMVQLLCEVEGMNILGLVVFAIVFGVALRKLGPEGELLIRFFNSFNDATMVLVSWIMWYAPVGILFLVASKIVEMKDVRQLFISLGKYILCCLLGHAIHGLLVLPLIYFLFTRKNPYRFLWGIMTPLATAFGTSSSSATLPLMMKCVEEKNGVAKHISRFILPIGATVNMDGAALFQCVAAVFIAQLNGVSLDFVKIITILVTATASSVGAAGIPAGGVLTLAIILEAVSLPVKDISLILAVDWLVDRSCTVLNVEGDAFGAGLLQSYVDRTKMPSSEPELIQVKNEVSLNPLPLATEEGNPLLKQYQGPTGDSSATFEKESVM.

An N-acetylmethionine modification is found at Met-1. Topologically, residues 1–50 are cytoplasmic; it reads MAVDPPKADPKGVAVDSSRRCPALGSREDQSAKAGGCCGSRDRVRRCIRA. The chain crosses the membrane as a helical span at residues 51–80; it reads NLLVLLTVAAVVAGVGLGLGVSAAGGADAL. Residues 81–93 lie on the Extracellular side of the membrane; sequence GPARLTRFAFPGE. A helical membrane pass occupies residues 94–115; it reads LLLRLLKMIILPLVVCSLIGGA. The Cytoplasmic segment spans residues 116–129; it reads ASLDPSALGRVGAW. A helical membrane pass occupies residues 130 to 152; sequence ALLFFLVTTLLASALGVGLALAL. At 153–236 the chain is on the extracellular side; it reads KPGAAVTAIT…INSTMVQLLC (84 aa). Asn-165 and Asn-228 each carry an N-linked (GlcNAc...) asparagine glycan. Residues 237–260 traverse the membrane as a helical segment; sequence EVEGMNILGLVVFAIVFGVALRKL. Over 261–269 the chain is Cytoplasmic; sequence GPEGELLIR. A helical transmembrane segment spans residues 270-297; sequence FFNSFNDATMVLVSWIMWYAPVGILFLV. At 298–318 the chain is on the extracellular side; sequence ASKIVEMKDVRQLFISLGKYI. The chain crosses the membrane as a helical span at residues 319-340; it reads LCCLLGHAIHGLLVLPLIYFLF. Over 341–345 the chain is Cytoplasmic; the sequence is TRKNP. Residues 346–376 constitute an intramembrane region (discontinuously helical); sequence YRFLWGIMTPLATAFGTSSSSATLPLMMKCV. Residues 377 to 385 are Cytoplasmic-facing; it reads EEKNGVAKH. The helical transmembrane segment at 386–412 threads the bilayer; that stretch reads ISRFILPIGATVNMDGAALFQCVAAVF. 3 residues coordinate Na(+): Gly-394, Thr-396, and Asn-398. Residues 413–425 are Extracellular-facing; it reads IAQLNGVSLDFVK. The discontinuously helical intramembrane region spans 426-459; sequence IITILVTATASSVGAAGIPAGGVLTLAIILEAVS. The Extracellular segment spans residues 460–472; that stretch reads LPVKDISLILAVD. The chain crosses the membrane as a helical span at residues 473–494; sequence WLVDRSCTVLNVEGDAFGAGLL. The Na(+) site is built by Asn-483 and Asp-487. The Cytoplasmic segment spans residues 495–553; that stretch reads QSYVDRTKMPSSEPELIQVKNEVSLNPLPLATEEGNPLLKQYQGPTGDSSATFEKESVM. 5 positions are modified to phosphoserine: Ser-505, Ser-506, Ser-518, Ser-543, and Ser-551. The interval 531-553 is disordered; it reads PLLKQYQGPTGDSSATFEKESVM. Residues 537-546 are compositionally biased toward polar residues; sequence QGPTGDSSAT.

Belongs to the dicarboxylate/amino acid:cation symporter (DAACS) (TC 2.A.23) family. SLC1A5 subfamily. In terms of assembly, homotrimer. In terms of tissue distribution, highly expressed in adipose tissue. Detected in lung, skeletal muscle, large intestine, kidney and testis. Expressed in lung, brain, kidney and neural retina (at protein level). Expressed in Mueller cells (at protein level).

It is found in the cell membrane. The protein resides in the melanosome. The enzyme catalyses L-glutamine(out) + L-serine(in) + Na(+)(out) = L-glutamine(in) + L-serine(out) + Na(+)(in). The catalysed reaction is L-glutamine(in) + L-serine(out) + Na(+)(out) = L-glutamine(out) + L-serine(in) + Na(+)(in). It carries out the reaction L-threonine(in) + L-glutamine(out) + Na(+)(out) = L-threonine(out) + L-glutamine(in) + Na(+)(in). It catalyses the reaction L-threonine(out) + L-glutamine(in) + Na(+)(out) = L-threonine(in) + L-glutamine(out) + Na(+)(in). The enzyme catalyses L-asparagine(in) + L-glutamine(out) + Na(+)(out) = L-asparagine(out) + L-glutamine(in) + Na(+)(in). The catalysed reaction is L-asparagine(out) + L-glutamine(in) + Na(+)(out) = L-asparagine(in) + L-glutamine(out) + Na(+)(in). It carries out the reaction L-glutamine(in) + L-alanine(out) + Na(+)(out) = L-glutamine(out) + L-alanine(in) + Na(+)(in). It catalyses the reaction L-valine(out) + L-glutamine(in) + Na(+)(out) = L-valine(in) + L-glutamine(out) + Na(+)(in). The enzyme catalyses L-glutamine(in) + L-methionine(out) + Na(+)(out) = L-glutamine(out) + L-methionine(in) + Na(+)(in). The catalysed reaction is L-glutamine(in) + L-glutamate(out) + Na(+)(out) + H(+)(out) = L-glutamine(out) + L-glutamate(in) + Na(+)(in) + H(+)(in). It carries out the reaction D-serine(in) + L-glutamine(out) + Na(+)(out) = D-serine(out) + L-glutamine(in) + Na(+)(in). It catalyses the reaction D-serine(in) + L-alanine(out) + Na(+)(out) = D-serine(out) + L-alanine(in) + Na(+)(in). The enzyme catalyses nitrate(in) = nitrate(out). The catalysed reaction is iodide(out) = iodide(in). It carries out the reaction thiocyanate(in) = thiocyanate(out). With respect to regulation, down-regulated at acidic pH, with the exception of L-glutamate transport which is up-regulated instead. Sodium-coupled antiporter of neutral amino acids. In a tri-substrate transport cycle, exchanges neutral amino acids between the extracellular and intracellular compartments, coupled to the inward cotransport of at least one sodium ion. The preferred substrate is the essential amino acid L-glutamine, a precursor for biosynthesis of proteins, nucleotides and amine sugars as well as an alternative fuel for mitochondrial oxidative phosphorylation. Exchanges L-glutamine with other neutral amino acids such as L-serine, L-threonine and L-asparagine in a bidirectional way. Provides L-glutamine to proliferating stem and activated cells driving the metabolic switch toward cell differentiation. The transport cycle is usually pH-independent, with the exception of L-glutamate. Transports extracellular L-glutamate coupled to the cotransport of one proton and one sodium ion in exchange for intracellular L-glutamine counter-ion. May provide for L-glutamate uptake in glial cells regulating glutamine/glutamate cycle in the nervous system. Can transport D-amino acids. Mediates D-serine release from the retinal glia potentially affecting NMDA receptor function in retinal neurons. Displays sodium- and amino acid-dependent but uncoupled channel-like anion conductance with a preference SCN(-) &gt;&gt; NO3(-) &gt; I(-) &gt; Cl(-). Through binding of the fusogenic protein syncytin-1/ERVW-1 may mediate trophoblasts syncytialization, the spontaneous fusion of their plasma membranes, an essential process in placental development. This chain is Neutral amino acid transporter B(0) (Slc1a5), found in Mus musculus (Mouse).